The following is a 416-amino-acid chain: Phosphoglycerate kinase 2 (416 aa).

Substrate is bound by residues 28 to 30 (DMN), Arg44, 65 to 68 (HQSR), Arg122, and Arg162. Residues Glu337 and 362 to 365 (GGHI) each bind ATP.

The protein belongs to the phosphoglycerate kinase family. As to quaternary structure, monomer.

The protein localises to the cytoplasm. It carries out the reaction (2R)-3-phosphoglycerate + ATP = (2R)-3-phospho-glyceroyl phosphate + ADP. The protein operates within carbohydrate degradation; glycolysis; pyruvate from D-glyceraldehyde 3-phosphate: step 2/5. The chain is Phosphoglycerate kinase 2 from Methanosarcina acetivorans (strain ATCC 35395 / DSM 2834 / JCM 12185 / C2A).